Here is a 674-residue protein sequence, read N- to C-terminus: Glutaminase kidney isoform, mitochondrial (674 aa).

The N-terminal 54 residues, 1 to 54 (MMRLRGSAMLRELLLRPPAAVGAVLRRAQPLGTLCRRPRGGSRPTAGLVAAARL), are a transit peptide targeting the mitochondrion. A disordered region spans residues 56–123 (PWWGGGGRAK…PGETDAFGNS (68 aa)). Gly residues predominate over residues 58–71 (WGGGGRAKGPGAGG). Positions 89 to 101 (PPQQQQQQQQQPG) are enriched in low complexity. 2 positions are modified to N6-succinyllysine: lysine 135 and lysine 169. Serine 291 contacts substrate. At lysine 316 the chain carries N6-acetyllysine. Positions 320–327 (GLRFNKLF) are highly mobile activation loop. 6 residues coordinate substrate: asparagine 340, glutamate 386, asparagine 393, tyrosine 419, tyrosine 471, and valine 489. 2 ANK repeats span residues 590-619 (DSRT…VNPF) and 624-653 (WNNT…QYTP). Residues 652-674 (TPQGDSDDGKGNQTVHKNLDGLL) form a disordered region. Serine 657 carries the post-translational modification Phosphoserine.

This sequence belongs to the glutaminase family. As to quaternary structure, homotetramer, dimer of dimers. The tetramers can assemble into rod-like oligomers (in vitro), but the physiological significance of this is not clear. Interacts with RAF1 and MAP2K2. Interacts with ATCAY; the interaction is direct and may control GLS localization, negatively regulating its activity. In terms of processing, synthesized as a 74-kDa cytosolic precursor which is proteolytically processed by the mitochondrial-processing peptidase (MPP) via a 72-kDa intermediate to yield the mature mitochondrial 68- and 65-kDa subunits.

Its subcellular location is the mitochondrion. The protein localises to the cytoplasm. The protein resides in the cytosol. It is found in the mitochondrion matrix. The catalysed reaction is L-glutamine + H2O = L-glutamate + NH4(+). Isoform 1 and isoform 2 are activated by phosphate, due to increased affinity for glutamine. At phosphate concentrations above 10 mM, isoform 2 is more efficient than isoform 1. Functionally, catalyzes the first reaction in the primary pathway for the renal catabolism of glutamine. Plays a role in maintaining acid-base homeostasis. Regulates the levels of the neurotransmitter glutamate, the main excitatory neurotransmitter in the brain. The polypeptide is Glutaminase kidney isoform, mitochondrial (Gls) (Mus musculus (Mouse)).